The following is a 58-amino-acid chain: Small ribosomal subunit protein bS21 (58 aa).

The segment at 27 to 58 (GTLQELRKREHYEKPSVKRKRKSEAARKRKKY) is disordered. The segment covering 31–42 (ELRKREHYEKPS) has biased composition (basic and acidic residues). Over residues 43–58 (VKRKRKSEAARKRKKY) the composition is skewed to basic residues.

It belongs to the bacterial ribosomal protein bS21 family.

The chain is Small ribosomal subunit protein bS21 (rpsU) from Lactococcus lactis subsp. lactis (strain IL1403) (Streptococcus lactis).